Reading from the N-terminus, the 273-residue chain is MSVAKVDDNRKVTTHRLIEMKQRGEKISMLTAYDYSMAKLIDQAGMDVILVGDSASNVMAGNVTTLPITLDQMIYHGKSVMKAVNRALVVVDLPFGTYQGNSKEALASAIRVMKETHADCIKLEGGAEVRESIERILCAGIPIMGHLGLTPQSINKFGTYTVRAREEAEAKKLIEDAHLLEEIGCFALVLEKIPAELAARVASELTIPVIGIGAGGGVDGQVLVMHDMLGINQGFSPRFLRRYANLGEEITRAVQAYIEDVKSQDFPNEKEQY.

Mg(2+) is bound by residues Asp-53 and Asp-92. 3-methyl-2-oxobutanoate is bound by residues 53-54 (DS), Asp-92, and Lys-122. Glu-124 lines the Mg(2+) pocket. Glu-191 acts as the Proton acceptor in catalysis.

This sequence belongs to the PanB family. In terms of assembly, homodecamer; pentamer of dimers. It depends on Mg(2+) as a cofactor.

It localises to the cytoplasm. It carries out the reaction 3-methyl-2-oxobutanoate + (6R)-5,10-methylene-5,6,7,8-tetrahydrofolate + H2O = 2-dehydropantoate + (6S)-5,6,7,8-tetrahydrofolate. It participates in cofactor biosynthesis; (R)-pantothenate biosynthesis; (R)-pantoate from 3-methyl-2-oxobutanoate: step 1/2. In terms of biological role, catalyzes the reversible reaction in which hydroxymethyl group from 5,10-methylenetetrahydrofolate is transferred onto alpha-ketoisovalerate to form ketopantoate. The protein is 3-methyl-2-oxobutanoate hydroxymethyltransferase of Parabacteroides distasonis (strain ATCC 8503 / DSM 20701 / CIP 104284 / JCM 5825 / NCTC 11152).